Here is a 440-residue protein sequence, read N- to C-terminus: Platelet-activating factor acetylhydrolase (440 aa).

Positions 1–21 (MVPLKLQALFCLLCCLPWVHP) are cleaved as a signal peptide. N-linked (GlcNAc...) asparagine glycans are attached at residues Asn59, Asn75, and Asn199. Residue Ser272 is the Nucleophile of the active site. Catalysis depends on charge relay system residues Asp295 and His350.

It belongs to the AB hydrolase superfamily. Lipase family. Post-translationally, N-glycosylated. In terms of tissue distribution, plasma.

The protein resides in the secreted. The protein localises to the extracellular space. The enzyme catalyses a 1-O-alkyl-2-acetyl-sn-glycero-3-phosphocholine + H2O = a 1-O-alkyl-sn-glycero-3-phosphocholine + acetate + H(+). It catalyses the reaction 1-O-decyl-2-acetyl-sn-glycero-3-phosphocholine + H2O = 1-O-decyl-sn-glycero-3-phosphocholine + acetate + H(+). It carries out the reaction 1-O-dodecyl-2-acetyl-sn-glycero-3-phosphocholine + H2O = 1-O-dodecyl-sn-glycero-3-phosphocholine + acetate + H(+). The catalysed reaction is 1-O-tetradecyl-2-acetyl-sn-glycero-3-phosphocholine + H2O = 1-O-tetradecyl-sn-glycero-3-phosphocholine + acetate + H(+). The enzyme catalyses 1-O-hexadecyl-2-acetyl-sn-glycero-3-phosphocholine + H2O = 1-O-hexadecyl-sn-glycero-3-phosphocholine + acetate + H(+). It catalyses the reaction 1-O-octadecyl-2-acetyl-sn-glycero-3-phosphocholine + H2O = 1-O-octadecyl-sn-glycero-3-phosphocholine + acetate + H(+). It carries out the reaction 1-hexadecanoyl-2-acetyl-sn-glycero-3-phosphocholine + H2O = 1-hexadecanoyl-sn-glycero-3-phosphocholine + acetate + H(+). The catalysed reaction is 1-hexadecanoyl-2-propionyl-sn-glycero-3-phosphocholine + H2O = propanoate + 1-hexadecanoyl-sn-glycero-3-phosphocholine + H(+). The enzyme catalyses 1-hexadecanoyl-2-butanoyl-sn-glycero-3-phosphocholine + H2O = butanoate + 1-hexadecanoyl-sn-glycero-3-phosphocholine + H(+). It catalyses the reaction 1-hexadecanoyl-2-pentanoyl-sn-glycero-3-phosphocholine + H2O = pentanoate + 1-hexadecanoyl-sn-glycero-3-phosphocholine + H(+). It carries out the reaction 1-hexadecanoyl-2-glutaroyl-sn-glycero-3-phosphocholine + H2O = glutarate + 1-hexadecanoyl-sn-glycero-3-phosphocholine + H(+). The catalysed reaction is 1-hexadecanoyl-2-(5-oxopentanoyl)-sn-glycero-3-phosphocholine + H2O = 5-oxopentanoate + 1-hexadecanoyl-sn-glycero-3-phosphocholine + H(+). The enzyme catalyses 1-hexadecanoyl-2-(9-oxononanoyl)-sn-glycero-3-phosphocholine + H2O = 9-oxononanoate + 1-hexadecanoyl-sn-glycero-3-phosphocholine + H(+). It catalyses the reaction 1-hexadecanoyl-2-[9-hydroperoxy-(10E-octadecenoyl)]-sn-glycero-3-phosphocholine + H2O = 9-hydroperoxy-10E-octadecenoate + 1-hexadecanoyl-sn-glycero-3-phosphocholine + H(+). It carries out the reaction 1-hexadecanoyl-2-(10-hydroperoxy-8E-octadecenoyl)-sn-glycero-3-phosphocholine + H2O = 10-hydroperoxy-(8E)-octadecenoate + 1-hexadecanoyl-sn-glycero-3-phosphocholine + H(+). Its function is as follows. Lipoprotein-associated calcium-independent phospholipase A2 involved in phospholipid catabolism during inflammatory and oxidative stress response. At the lipid-aqueous interface, hydrolyzes the ester bond of fatty acyl group attached at sn-2 position of phospholipids (phospholipase A2 activity). Specifically targets phospholipids with a short-chain fatty acyl group at sn-2 position. Can hydrolyze phospholipids with long fatty acyl chains, only if they carry oxidized functional groups. Hydrolyzes and inactivates platelet-activating factor (PAF, 1-O-alkyl-2-acetyl-sn-glycero-3-phosphocholine), a potent pro-inflammatory signaling lipid that acts through PTAFR on various innate immune cells. Hydrolyzes oxidatively truncated phospholipids carrying an aldehyde group at omega position, preventing their accumulation in lipoprotein particles and uncontrolled pro-inflammatory effects. As part of high-density lipoprotein (HDL) particles, can hydrolyze phospholipids having long-chain fatty acyl hydroperoxides at sn-2 position and protect against potential accumulation of these oxylipins in the vascular wall. Catalyzes the release from membrane phospholipids of F2-isoprostanes, lipid biomarkers of cellular oxidative damage. This Mus musculus (Mouse) protein is Platelet-activating factor acetylhydrolase (Pla2g7).